Consider the following 934-residue polypeptide: Glycine dehydrogenase (decarboxylating) (934 aa).

The residue at position 687 (Lys-687) is an N6-(pyridoxal phosphate)lysine.

The protein belongs to the GcvP family. In terms of assembly, the glycine cleavage system is composed of four proteins: P, T, L and H. The cofactor is pyridoxal 5'-phosphate.

The enzyme catalyses N(6)-[(R)-lipoyl]-L-lysyl-[glycine-cleavage complex H protein] + glycine + H(+) = N(6)-[(R)-S(8)-aminomethyldihydrolipoyl]-L-lysyl-[glycine-cleavage complex H protein] + CO2. The glycine cleavage system catalyzes the degradation of glycine. The P protein binds the alpha-amino group of glycine through its pyridoxal phosphate cofactor; CO(2) is released and the remaining methylamine moiety is then transferred to the lipoamide cofactor of the H protein. This is Glycine dehydrogenase (decarboxylating) from Nocardia farcinica (strain IFM 10152).